The following is a 315-amino-acid chain: 10-epi-cubebol synthase (315 aa).

Mg(2+) is bound by residues Asp79, Asn220, Ser224, and Glu228. A DDXXD motif motif is present at residues 79–83; it reads DDVCE. Residues 220–228 carry the NXXXSXXXE motif motif; sequence NDIYSLRKE.

It belongs to the terpene synthase family. The cofactor is Mg(2+).

It catalyses the reaction (2E,6E)-farnesyl diphosphate + H2O = 10-epi-cubebol + diphosphate. Its function is as follows. Catalyzes the cyclization of farnesyl diphosphate (FPP) to 10-epi-cubebol. Is also responsible for the formation of many other sesquiterpenes, mainly cadalanes and cubebanes, including 1,10-di-epi-cubebol and the cadalanes delta-cadinene, T-cadinol and alpha-cadinol. The sequence is that of 10-epi-cubebol synthase from Sorangium cellulosum (strain So ce56) (Polyangium cellulosum (strain So ce56)).